The chain runs to 567 residues: Mitogen-activated protein kinase 16 (567 aa).

A Protein kinase domain is found at 25–316 (YRIEEVIGKG…AEEALADVYF (292 aa)). Residues 31–39 (IGKGSYGVV) and Lys-54 each bind ATP. Asp-151 serves as the catalytic Proton acceptor. Phosphothreonine is present on Thr-187. The TXY signature appears at 187-189 (TDY). Tyr-189 is subject to Phosphotyrosine. At Thr-192 the chain carries Phosphothreonine. Disordered regions lie at residues 428-455 (AQQS…ADRN) and 512-567 (PAAA…SRWY). A compositionally biased stretch (basic and acidic residues) spans 443–453 (SIRDERPRGAD). The span at 545-567 (KPNTQYIPQKVSAAQDTAMSRWY) shows a compositional bias: polar residues.

This sequence belongs to the protein kinase superfamily. CMGC Ser/Thr protein kinase family. MAP kinase subfamily. Post-translationally, dually phosphorylated on Thr-187 and Tyr-189, which activates the enzyme.

It catalyses the reaction L-seryl-[protein] + ATP = O-phospho-L-seryl-[protein] + ADP + H(+). The catalysed reaction is L-threonyl-[protein] + ATP = O-phospho-L-threonyl-[protein] + ADP + H(+). Its activity is regulated as follows. Activated by threonine and tyrosine phosphorylation. The polypeptide is Mitogen-activated protein kinase 16 (MPK16) (Arabidopsis thaliana (Mouse-ear cress)).